Reading from the N-terminus, the 122-residue chain is Zein-alpha B49 (122 aa).

This sequence belongs to the zein family.

In terms of biological role, zeins are major seed storage proteins. The polypeptide is Zein-alpha B49 (Zea mays (Maize)).